The chain runs to 230 residues: Phosphoglycerate mutase-like protein 4 (230 aa).

The Tele-phosphohistidine intermediate role is filled by His21. The Proton donor/acceptor role is filled by Glu96.

Belongs to the phosphoglycerate mutase family.

Functionally, may play a role in carbohydrates metabolism. The sequence is that of Phosphoglycerate mutase-like protein 4 from Arabidopsis thaliana (Mouse-ear cress).